A 354-amino-acid chain; its full sequence is MRFDLEPPSSVAAAHRIGVLLINLGTPDAPTPRAVRRYLAEFLSDPRVVEIPQAVWQVLLRTLILPLRGRASAKKYAAVWMPEGSPLRVYTERQTDSVRHLLTSNGYHVMVDYAMRYGSPNISHALTQFKRAGVERVLLMPMYPQYSASTTATAFDAAFDALARMRNQPEVRTVRHYADHPAYIHALAEQVRQYWAQHGRPDFAAGDKLVLSFHGVPKRTLDLGDPYHDQCQQTGALLMAALGLSTTECRVTFQSRFGKAEWLQPYTAPTLREFGEAGVRRADVFCPGFTADCLETIEEIGMEVRDEFLAGGGKTFHRIPCLNGASAWIGALGEIVAENLQGWPVKAAQPEPVN.

The Fe cation site is built by His214 and Glu295.

The protein belongs to the ferrochelatase family.

It is found in the cytoplasm. It carries out the reaction heme b + 2 H(+) = protoporphyrin IX + Fe(2+). The protein operates within porphyrin-containing compound metabolism; protoheme biosynthesis; protoheme from protoporphyrin-IX: step 1/1. In terms of biological role, catalyzes the ferrous insertion into protoporphyrin IX. The protein is Ferrochelatase of Burkholderia orbicola (strain MC0-3).